A 72-amino-acid polypeptide reads, in one-letter code: UPF0337 protein bsl2407 (72 aa).

The disordered stretch occupies residues 1–55 (MGSTTDKIKGNANEAIGKAKQGIGEATGSDRLKGEGVVQEVKGKGQQAMGDAKDA). Low complexity predominate over residues 35–47 (EGVVQEVKGKGQQ).

This sequence belongs to the UPF0337 (CsbD) family.

This chain is UPF0337 protein bsl2407, found in Bradyrhizobium diazoefficiens (strain JCM 10833 / BCRC 13528 / IAM 13628 / NBRC 14792 / USDA 110).